Consider the following 162-residue polypeptide: NADH-quinone oxidoreductase subunit I (162 aa).

2 consecutive 4Fe-4S ferredoxin-type domains span residues 53–83 and 93–122; these read QRRY…IESE and SRYD…ETHI. 8 residues coordinate [4Fe-4S] cluster: cysteine 63, cysteine 66, cysteine 69, cysteine 73, cysteine 102, cysteine 105, cysteine 108, and cysteine 112.

Belongs to the complex I 23 kDa subunit family. NDH-1 is composed of 14 different subunits. Subunits NuoA, H, J, K, L, M, N constitute the membrane sector of the complex. The cofactor is [4Fe-4S] cluster.

It is found in the cell inner membrane. It carries out the reaction a quinone + NADH + 5 H(+)(in) = a quinol + NAD(+) + 4 H(+)(out). In terms of biological role, NDH-1 shuttles electrons from NADH, via FMN and iron-sulfur (Fe-S) centers, to quinones in the respiratory chain. The immediate electron acceptor for the enzyme in this species is believed to be ubiquinone. Couples the redox reaction to proton translocation (for every two electrons transferred, four hydrogen ions are translocated across the cytoplasmic membrane), and thus conserves the redox energy in a proton gradient. The sequence is that of NADH-quinone oxidoreductase subunit I from Chromobacterium violaceum (strain ATCC 12472 / DSM 30191 / JCM 1249 / CCUG 213 / NBRC 12614 / NCIMB 9131 / NCTC 9757 / MK).